The following is a 251-amino-acid chain: Eukaryotic translation initiation factor 3 subunit K (251 aa).

One can recognise a PCI domain in the interval 46 to 224 (FDCYANLALL…VKVPTNKENE (179 aa)).

The protein belongs to the eIF-3 subunit K family. As to quaternary structure, component of the eukaryotic translation initiation factor 3 (eIF-3) complex.

It is found in the cytoplasm. Its function is as follows. Component of the eukaryotic translation initiation factor 3 (eIF-3) complex, which is involved in protein synthesis of a specialized repertoire of mRNAs and, together with other initiation factors, stimulates binding of mRNA and methionyl-tRNAi to the 40S ribosome. The eIF-3 complex specifically targets and initiates translation of a subset of mRNAs involved in cell proliferation. The sequence is that of Eukaryotic translation initiation factor 3 subunit K from Aspergillus oryzae (strain ATCC 42149 / RIB 40) (Yellow koji mold).